We begin with the raw amino-acid sequence, 447 residues long: Phosphoglucosamine mutase (447 aa).

Catalysis depends on Ser106, which acts as the Phosphoserine intermediate. Mg(2+)-binding residues include Ser106, Asp245, Asp247, and Asp249. Ser106 carries the post-translational modification Phosphoserine.

This sequence belongs to the phosphohexose mutase family. Requires Mg(2+) as cofactor. Activated by phosphorylation.

It carries out the reaction alpha-D-glucosamine 1-phosphate = D-glucosamine 6-phosphate. Its function is as follows. Catalyzes the conversion of glucosamine-6-phosphate to glucosamine-1-phosphate. This Cupriavidus taiwanensis (strain DSM 17343 / BCRC 17206 / CCUG 44338 / CIP 107171 / LMG 19424 / R1) (Ralstonia taiwanensis (strain LMG 19424)) protein is Phosphoglucosamine mutase.